Consider the following 155-residue polypeptide: Aspartate carbamoyltransferase regulatory chain (155 aa).

Cys-110, Cys-115, Cys-139, and Cys-142 together coordinate Zn(2+).

The protein belongs to the PyrI family. Contains catalytic and regulatory chains. Zn(2+) is required as a cofactor.

Involved in allosteric regulation of aspartate carbamoyltransferase. The sequence is that of Aspartate carbamoyltransferase regulatory chain from Yersinia pestis bv. Antiqua (strain Antiqua).